Reading from the N-terminus, the 203-residue chain is Transcriptional regulator GfcR (203 aa).

Belongs to the purine/pyrimidine phosphoribosyltransferase family. GfcR subfamily.

The chain is Transcriptional regulator GfcR from Methanothrix thermoacetophila (strain DSM 6194 / JCM 14653 / NBRC 101360 / PT) (Methanosaeta thermophila).